The sequence spans 553 residues: Putative transport protein YidE (553 aa).

5 helical membrane-spanning segments follow: residues 4-24 (IALTVSILALVAVVGLFIGNV), 28-48 (GIGLGIGGVLFGGIIVGHFVS), 65-85 (FGLILFVYTIGIQVGPGFFAS), 95-115 (LFAVLIVIIGGLVTAILHKLF), and 158-178 (MSYAMAYPFGICGILFTMWML). 2 RCK C-terminal domains span residues 191–276 (QQHE…VIGQ) and 279–361 (DTSL…VLGN). A run of 6 helical transmembrane segments spans residues 371–391 (MLPVFIGIGLGVLLGSIPVFV), 393–413 (GFPAALKLGLAGGPLIMALIL), 439–459 (IVLFLSIVGLKSGGDFVNTLV), 464–484 (LSWIGYGALITAVPLITVGIL), 493–513 (YLTMCGMLAGSMTDPPALAFA), and 533–553 (LVMFLRIITPQLLAVLFWSIG).

It belongs to the AAE transporter (TC 2.A.81) family. YidE subfamily.

The protein localises to the cell membrane. This Shigella flexneri serotype 5b (strain 8401) protein is Putative transport protein YidE.